The following is a 384-amino-acid chain: Proteinase K (384 aa).

Residues 1–15 (MRLSVLLSLLPLALG) form the signal peptide. A propeptide spanning residues 16 to 105 (APAVEQRSEA…IEQDAVVTIN (90 aa)) is cleaved from the precursor. An Inhibitor I9 domain is found at 39 to 104 (KYIVKFKEGS…YIEQDAVVTI (66 aa)). Residues 112–384 (PWGLARISST…NLLAYNNYQA (273 aa)) form the Peptidase S8 domain. T121 lines the Ca(2+) pocket. C139 and C228 form a disulfide bridge. Residues D144 and H174 each act as charge relay system in the active site. P280, V282, and D305 together coordinate Ca(2+). C283 and C354 are disulfide-bonded. S329 acts as the Charge relay system in catalysis. Ca(2+) is bound at residue D365.

The protein belongs to the peptidase S8 family. The cofactor is Ca(2+).

The enzyme catalyses Hydrolysis of keratin, and of other proteins with subtilisin-like specificity. Hydrolyzes peptide amides.. In terms of biological role, hydrolyzes keratin at aromatic and hydrophobic residues. In Parengyodontium album (Tritirachium album), this protein is Proteinase K (PROK).